The primary structure comprises 350 residues: Anthranilate phosphoribosyltransferase (350 aa).

5-phospho-alpha-D-ribose 1-diphosphate-binding positions include Gly-82, Gly-85–Asp-86, Ser-90, Asn-92–Thr-95, Lys-110–Gly-118, and Gly-122. Gly-82 is a binding site for anthranilate. Residue Ser-94 coordinates Mg(2+). Residue Asn-113 coordinates anthranilate. Position 168 (Arg-168) interacts with anthranilate. 2 residues coordinate Mg(2+): Asp-232 and Glu-233.

This sequence belongs to the anthranilate phosphoribosyltransferase family. In terms of assembly, homodimer. Requires Mg(2+) as cofactor.

The catalysed reaction is N-(5-phospho-beta-D-ribosyl)anthranilate + diphosphate = 5-phospho-alpha-D-ribose 1-diphosphate + anthranilate. The protein operates within amino-acid biosynthesis; L-tryptophan biosynthesis; L-tryptophan from chorismate: step 2/5. Its function is as follows. Catalyzes the transfer of the phosphoribosyl group of 5-phosphorylribose-1-pyrophosphate (PRPP) to anthranilate to yield N-(5'-phosphoribosyl)-anthranilate (PRA). The protein is Anthranilate phosphoribosyltransferase of Methanothermobacter marburgensis (strain ATCC BAA-927 / DSM 2133 / JCM 14651 / NBRC 100331 / OCM 82 / Marburg) (Methanobacterium thermoautotrophicum).